We begin with the raw amino-acid sequence, 270 residues long: 4-hydroxy-tetrahydrodipicolinate reductase (270 aa).

NAD(+)-binding positions include 9 to 14 and Glu35; that span reads GAGGRM. NADP(+) is bound at residue Arg36. Residues 99–101 and 123–126 each bind NAD(+); these read GTT and ASNY. His156 serves as the catalytic Proton donor/acceptor. His157 is a (S)-2,3,4,5-tetrahydrodipicolinate binding site. Catalysis depends on Lys160, which acts as the Proton donor. 166–167 provides a ligand contact to (S)-2,3,4,5-tetrahydrodipicolinate; that stretch reads GT.

It belongs to the DapB family.

It is found in the cytoplasm. It carries out the reaction (S)-2,3,4,5-tetrahydrodipicolinate + NAD(+) + H2O = (2S,4S)-4-hydroxy-2,3,4,5-tetrahydrodipicolinate + NADH + H(+). The enzyme catalyses (S)-2,3,4,5-tetrahydrodipicolinate + NADP(+) + H2O = (2S,4S)-4-hydroxy-2,3,4,5-tetrahydrodipicolinate + NADPH + H(+). Its pathway is amino-acid biosynthesis; L-lysine biosynthesis via DAP pathway; (S)-tetrahydrodipicolinate from L-aspartate: step 4/4. Catalyzes the conversion of 4-hydroxy-tetrahydrodipicolinate (HTPA) to tetrahydrodipicolinate. This chain is 4-hydroxy-tetrahydrodipicolinate reductase, found in Histophilus somni (strain 129Pt) (Haemophilus somnus).